The sequence spans 196 residues: Crossover junction endodeoxyribonuclease RuvC (196 aa).

Residues Asp23, Glu83, and His156 contribute to the active site. The Mg(2+) site is built by Asp23, Glu83, and His156.

This sequence belongs to the RuvC family. As to quaternary structure, homodimer which binds Holliday junction (HJ) DNA. The HJ becomes 2-fold symmetrical on binding to RuvC with unstacked arms; it has a different conformation from HJ DNA in complex with RuvA. In the full resolvosome a probable DNA-RuvA(4)-RuvB(12)-RuvC(2) complex forms which resolves the HJ. It depends on Mg(2+) as a cofactor.

It is found in the cytoplasm. The enzyme catalyses Endonucleolytic cleavage at a junction such as a reciprocal single-stranded crossover between two homologous DNA duplexes (Holliday junction).. Functionally, the RuvA-RuvB-RuvC complex processes Holliday junction (HJ) DNA during genetic recombination and DNA repair. Endonuclease that resolves HJ intermediates. Cleaves cruciform DNA by making single-stranded nicks across the HJ at symmetrical positions within the homologous arms, yielding a 5'-phosphate and a 3'-hydroxyl group; requires a central core of homology in the junction. The consensus cleavage sequence is 5'-(A/T)TT(C/G)-3'. Cleavage occurs on the 3'-side of the TT dinucleotide at the point of strand exchange. HJ branch migration catalyzed by RuvA-RuvB allows RuvC to scan DNA until it finds its consensus sequence, where it cleaves and resolves the cruciform DNA. The protein is Crossover junction endodeoxyribonuclease RuvC of Treponema pallidum (strain Nichols).